A 1857-amino-acid chain; its full sequence is MKMSEGIISPLSLSSESSEQQQAAIRKFSNGSNGSGGGGGSNLSVNSSNSGSNNSIRKSSTLMYNGPLPSINDGKELLLENSKPKVVELVNTFNHKPLSTIHSVHNEIPPPAIEKEKKEIINTISNSGVTKYMTALEILDSTINTPLNRSRSGSIGSKPICNNLTSSSSSSSTTATTPSPTTTSNNNNNNNNNNNNNNNNNNNNNNNNNNNNNNNNNNNNNNNNNNTTSTTTTTTSILISSSPPPSSSSSSSSNDEQFNNNNNNNNSNSGGSSRMITSKSQIKPLIVTSNTAATTTTTTTTNTSAPTTPTNRVQSSLDDLLFNLPTIPSNVPTVNGGPKISAVPKKVSSSKLLIPPSSNVSSSSNITLSLSSSSPSSSSSSSTSTVVPIVQLSSSNSTNSPSTSLPTTPRLSQPTTSYTQLIPSQQQQQPTESNSSSNTNTTTTSSSSSSSSSSLTISSPQPSNNSIRISAFGRSSTQFTISSNGIPSSPGQVSNKDYNNIGNLSNSSGERVKNKQYSMLNISKKTILDESDISSSPRSIGSPNSIRASISSQLPPSLSSIGGGGGGGSGPNVVSNKPLVVKKPSTSEHIKKENIWRQTMIPLTKEDHIKVVFEGIPGKRVIQKFLIDKTPIEIKSKFFEDLKDGDLLNGLTQLPSLIPEHYELKVLSVNSTISNETLPLRRQTLMQACNISRLFPKLHLILKSESTTILDGASTTTTTTTTTTTTTANQSSNIITKSNSSLDLTINNSNEIIDVKGHIQAELEIFELIGTSFTRVLDQGQEVVSFRRDFAQFRLSNFTSTRNDLSQMIYVSSEPLPLTIPNKITIMVLLPGDGKIIKRVDCCPNSSVGDVKKEIFKKFAMIDRVHTQGKTQDDFVLKVTGFREYILCIHELGNLTSRQRFYPTGSGGDFSLMDYDYIRQCVGKNQTVELSLTNNSILSLNQVSEKVSFIDKILETSDFDDYDEDLDSINSNSFDDLKQSIQQQQQQQIQTVINIKETNKENKDSNKENKDSSSNNNNNNNNNNNNNNNNNNNNNNNNNNNGNNNGNNSNNNSNSNISRGSIDSEGNGSGSGNGSEQPTLIGVQNFSLPNNSKLPINIVKRLFRVNIAGLRNLNFNNNEDARNKFADGKNNQPNVFVMAELYYGGELLTNPVFTPIAQLASYGDGSVEFPNWEKGIAFTIPIRYLPRAARASFTVYVTTISEALESQMDEVVSKSIPIGWSNCLLMNHKGMLRMGPTAFRLWDDGRRANPIGTCVDNQAAKQPIILLVEFESFIRPIVYVDTALQSMMVNDSSSISSNGVESPSIVSFSSSAASSSPLPSSPLPSPVGLKKLDLDEARRLKALMDSDPLVQLSAEDKKLVYGYRHIYKSKPKALAKFLLSVNWIDPDQVTDAYRQMNDWALLKPVQALEILDAKFADEHVRNFAIKIINSFSDAEFSDFLLQLTQVLKYEPYHNSDLTHILIQRALSNRSRIGHFFFWFLKSEMHTPEIEERYGLLLEGYLRSCGTHRQDLIKQNQVLKSLHTVAMAVKQTNGSSERKKVLMEGLSKIKFPDTFQLPLDPRWEAKGLIIDKCRYMDSKKLPLWLVFENVEPHAKPLTVIFKVGDDLRQDILTLQVLRIMDKFWKNSGMDLRLQPYKCIATGDGIGMLEVVLNANTIANINKDAGGTGALLEEKTLVNWLKECNKTEAEYNKAVETFILSCAGYVVATYVMGIGDRHSDNIMITKLGHLFHIDFGHFLGNYKKKYGFKRERAPFIFTPQYMAIVGGKDSENFKRFVTTCCSAYNILRKNTDLFINLFQLMLSTGIPELQVAEDIDYLRKALAPGLSDEEAAEEFTKNISVALNTKTVLLNDIFHGWAH.

Composition is skewed to low complexity over residues 1–32 (MKMS…SNGS) and 42–55 (NLSV…SNNS). 5 disordered regions span residues 1–61 (MKMS…KSST), 145–313 (TPLN…TNRV), 348–468 (SSSK…NSIR), 481–512 (ISSN…GERV), and 530–573 (ESDI…GPNV). Residues 145–155 (TPLNRSRSGSI) are compositionally biased toward polar residues. Low complexity predominate over residues 162-269 (NNLTSSSSSS…NNNNNNNSNS (108 aa)). Residues 270-281 (GGSSRMITSKSQ) are compositionally biased toward polar residues. Composition is skewed to low complexity over residues 288–311 (TSNT…TPTN) and 352–464 (LLIP…QPSN). The span at 533–560 (ISSSPRSIGSPNSIRASISSQLPPSLSS) shows a compositional bias: low complexity. Positions 561–570 (IGGGGGGGSG) are enriched in gly residues. Residues 821–934 (PNKITIMVLL…NQTVELSLTN (114 aa)) enclose the PI3K-RBD domain. A disordered region spans residues 996-1078 (KETNKENKDS…SGSGNGSEQP (83 aa)). Basic and acidic residues predominate over residues 997–1011 (ETNKENKDSNKENKD). Over residues 1012-1056 (SSSNNNNNNNNNNNNNNNNNNNNNNNNNNNGNNNGNNSNNNSNSN) the composition is skewed to low complexity. Positions 1099-1271 (VKRLFRVNIA…QPIILLVEFE (173 aa)) constitute a C2 PI3K-type domain. Residues 1326–1503 (PVGLKKLDLD…GLLLEGYLRS (178 aa)) enclose the PIK helical domain. The region spanning 1568 to 1845 (IIDKCRYMDS…NISVALNTKT (278 aa)) is the PI3K/PI4K catalytic domain. A G-loop region spans residues 1574–1580 (YMDSKKL). The interval 1711–1719 (GIGDRHSDN) is catalytic loop. The interval 1730–1756 (HIDFGHFLGNYKKKYGFKRERAPFIFT) is activation loop.

The protein belongs to the PI3/PI4-kinase family.

It catalyses the reaction a 1,2-diacyl-sn-glycero-3-phospho-(1D-myo-inositol) + ATP = a 1,2-diacyl-sn-glycero-3-phospho-(1D-myo-inositol-3-phosphate) + ADP + H(+). The polypeptide is Phosphatidylinositol 3-kinase 2 (pikB) (Dictyostelium discoideum (Social amoeba)).